A 257-amino-acid chain; its full sequence is Putative hydro-lyase Bcep18194_B2576 (257 aa).

This sequence belongs to the D-glutamate cyclase family.

The chain is Putative hydro-lyase Bcep18194_B2576 from Burkholderia lata (strain ATCC 17760 / DSM 23089 / LMG 22485 / NCIMB 9086 / R18194 / 383).